We begin with the raw amino-acid sequence, 476 residues long: Inosine-5'-monophosphate dehydrogenase (476 aa).

2 CBS domains span residues 93 to 151 (IIRD…VKDI) and 152 to 211 (MTKD…TRDE). NAD(+)-binding positions include aspartate 242 and 292-294 (GIG). Glycine 294 and glycine 296 together coordinate K(+). Serine 297 serves as a coordination point for IMP. Cysteine 299 lines the K(+) pocket. The active-site Thioimidate intermediate is cysteine 299. IMP is bound by residues 334-336 (DGG), 357-358 (GY), and 381-385 (YRGMG). Arginine 398 acts as the Proton acceptor in catalysis. Glutamate 408 is a binding site for IMP. Position 462 (glutamate 462) interacts with K(+).

This sequence belongs to the IMPDH/GMPR family. In terms of assembly, homotetramer. It depends on K(+) as a cofactor.

The catalysed reaction is IMP + NAD(+) + H2O = XMP + NADH + H(+). It functions in the pathway purine metabolism; XMP biosynthesis via de novo pathway; XMP from IMP: step 1/1. Mycophenolic acid (MPA) is a non-competitive inhibitor that prevents formation of the closed enzyme conformation by binding to the same site as the amobile flap. In contrast, mizoribine monophosphate (MZP) is a competitive inhibitor that induces the closed conformation. MPA is a potent inhibitor of mammalian IMPDHs but a poor inhibitor of the bacterial enzymes. MZP is a more potent inhibitor of bacterial IMPDH. Functionally, catalyzes the conversion of inosine 5'-phosphate (IMP) to xanthosine 5'-phosphate (XMP), the first committed and rate-limiting step in the de novo synthesis of guanine nucleotides, and therefore plays an important role in the regulation of cell growth. This Korarchaeum cryptofilum (strain OPF8) protein is Inosine-5'-monophosphate dehydrogenase.